The sequence spans 198 residues: Elongation factor Ts (198 aa).

The interval 82–85 (SDFV) is involved in Mg(2+) ion dislocation from EF-Tu.

The protein belongs to the EF-Ts family.

It localises to the cytoplasm. Associates with the EF-Tu.GDP complex and induces the exchange of GDP to GTP. It remains bound to the aminoacyl-tRNA.EF-Tu.GTP complex up to the GTP hydrolysis stage on the ribosome. The sequence is that of Elongation factor Ts from Desulfosudis oleivorans (strain DSM 6200 / JCM 39069 / Hxd3) (Desulfococcus oleovorans).